Consider the following 116-residue polypeptide: Peptidyl-tRNA hydrolase (116 aa).

The protein belongs to the PTH2 family.

The protein localises to the cytoplasm. The catalysed reaction is an N-acyl-L-alpha-aminoacyl-tRNA + H2O = an N-acyl-L-amino acid + a tRNA + H(+). Functionally, the natural substrate for this enzyme may be peptidyl-tRNAs which drop off the ribosome during protein synthesis. This Methanopyrus kandleri (strain AV19 / DSM 6324 / JCM 9639 / NBRC 100938) protein is Peptidyl-tRNA hydrolase.